Here is a 763-residue protein sequence, read N- to C-terminus: Amyloid beta precursor like protein 2 (763 aa).

The signal sequence occupies residues 1-31 (MAATGTAAAAATGRLLLLLLVGLTAPALALA). The Extracellular segment spans residues 32–692 (GYIEALAANA…PLREDFSLSS (661 aa)). Positions 46 to 139 (AVAEPQIAMF…PFKCLVGEFV (94 aa)) are GFLD subdomain. One can recognise an E1 domain in the interval 46-205 (AVAEPQIAMF…HGTEYVCCPQ (160 aa)). Disulfide bonds link Cys56-Cys80, Cys91-Cys133, Cys116-Cys123, Cys149-Cys203, Cys160-Cys190, and Cys174-Cys202. The interval 147 to 205 (EKCQFFHKERMEVCENHQHWHTVVKEACLTQGMTLYSYGMLLPCGVDQFHGTEYVCCPQ) is cuBD subdomain. Cu cation contacts are provided by His163, His167, and Tyr184. The interval 211 to 299 (SVSKEEEEED…EPGSDGTMSD (89 aa)) is disordered. 2 stretches are compositionally biased toward acidic residues: residues 215–233 (EEEE…EEDY) and 242–269 (TEAD…EVVE). Residues 270 to 282 (DRDYYYDTFKGDD) show a composition bias toward basic and acidic residues. One can recognise a BPTI/Kunitz inhibitor domain in the interval 306 to 364 (VKAVCSQEAMTGPCRAVMPRWYFDLSKGKCVRFIYGGCGGNRNNFESEDYCMAVCKAMI). Disulfide bonds link Cys310–Cys360, Cys319–Cys343, and Cys335–Cys356. Positions 373 to 564 (DVDVYFETSA…QEIQEEIDEL (192 aa)) constitute an E2 domain. The residue at position 590 (Ser590) is a Phosphoserine; by FAM20C. Ser626 carries an O-linked (Xyl...) (chondroitin sulfate) serine glycan. The helical transmembrane segment at 693–716 (SALIGLLVIAVAIATVIVISLVML) threads the bilayer. Over 717-763 (RKRQYGTISHGIVEVDPMLTPEERHLNKMQNHGYENPTYKYLEQMQI) the chain is Cytoplasmic. The tract at residues 749–763 (GYENPTYKYLEQMQI) is interaction with DAB2. The short motif at 750-755 (YENPTY) is the NPXY motif element.

Belongs to the APP family. In terms of assembly, interacts with CPEB1. Interacts (via NPXY motif) with DAB2 (via PID domain); the interaction is impaired by tyrosine phosphorylation of the NPXY motif. Interacts (via cytoplasmic domain) with APBB2/FE65L. Interacts (via intracellular domain) with APBB3/FE65L2. The BPTI/Kunitz inhibitor domain is O-glycosylated. Expressed in placenta, brain, heart, lung, liver, kidney and endothelial tissues.

Its subcellular location is the cell membrane. It is found in the nucleus. Its function is as follows. May play a role in the regulation of hemostasis. The soluble form may have inhibitory properties towards coagulation factors. May interact with cellular G-protein signaling pathways. May bind to the DNA 5'-GTCACATG-3'(CDEI box). Inhibits trypsin, chymotrypsin, plasmin, factor XIA and plasma and glandular kallikrein. Modulates the Cu/Zn nitric oxide-catalyzed autodegradation of GPC1 heparan sulfate side chains in fibroblasts. This is Amyloid beta precursor like protein 2 from Homo sapiens (Human).